Reading from the N-terminus, the 91-residue chain is Probable Fe(2+)-trafficking protein (91 aa).

Belongs to the Fe(2+)-trafficking protein family. In terms of assembly, monomer.

In terms of biological role, could be a mediator in iron transactions between iron acquisition and iron-requiring processes, such as synthesis and/or repair of Fe-S clusters in biosynthetic enzymes. This is Probable Fe(2+)-trafficking protein from Citrobacter koseri (strain ATCC BAA-895 / CDC 4225-83 / SGSC4696).